The following is a 319-amino-acid chain: ATP-dependent 6-phosphofructokinase (319 aa).

G11 lines the ATP pocket. Position 21–25 (21–25 (RAVVR)) interacts with ADP. Residues 72–73 (RC) and 102–105 (GDGS) each bind ATP. A Mg(2+)-binding site is contributed by D103. A substrate-binding site is contributed by 125 to 127 (TID). D127 serves as the catalytic Proton acceptor. R154 is a binding site for ADP. Residues R162 and 169 to 171 (MGR) each bind substrate. ADP-binding positions include 185–187 (GAE), R211, and 213–215 (KKH). Residues E222, R243, and 249–252 (HVQR) contribute to the substrate site.

It belongs to the phosphofructokinase type A (PFKA) family. ATP-dependent PFK group I subfamily. Prokaryotic clade 'B1' sub-subfamily. As to quaternary structure, homotetramer. Requires Mg(2+) as cofactor.

The protein localises to the cytoplasm. The enzyme catalyses beta-D-fructose 6-phosphate + ATP = beta-D-fructose 1,6-bisphosphate + ADP + H(+). Its pathway is carbohydrate degradation; glycolysis; D-glyceraldehyde 3-phosphate and glycerone phosphate from D-glucose: step 3/4. Its activity is regulated as follows. Allosterically activated by ADP and other diphosphonucleosides, and allosterically inhibited by phosphoenolpyruvate. Functionally, catalyzes the phosphorylation of D-fructose 6-phosphate to fructose 1,6-bisphosphate by ATP, the first committing step of glycolysis. The protein is ATP-dependent 6-phosphofructokinase of Bacillus cereus (strain ATCC 14579 / DSM 31 / CCUG 7414 / JCM 2152 / NBRC 15305 / NCIMB 9373 / NCTC 2599 / NRRL B-3711).